The sequence spans 503 residues: Probable cytosol aminopeptidase (503 aa).

Residues lysine 274 and aspartate 279 each coordinate Mn(2+). Lysine 286 is a catalytic residue. Residues aspartate 297, aspartate 356, and glutamate 358 each contribute to the Mn(2+) site. Arginine 360 is a catalytic residue.

It belongs to the peptidase M17 family. Requires Mn(2+) as cofactor.

The protein resides in the cytoplasm. The catalysed reaction is Release of an N-terminal amino acid, Xaa-|-Yaa-, in which Xaa is preferably Leu, but may be other amino acids including Pro although not Arg or Lys, and Yaa may be Pro. Amino acid amides and methyl esters are also readily hydrolyzed, but rates on arylamides are exceedingly low.. It catalyses the reaction Release of an N-terminal amino acid, preferentially leucine, but not glutamic or aspartic acids.. Presumably involved in the processing and regular turnover of intracellular proteins. Catalyzes the removal of unsubstituted N-terminal amino acids from various peptides. The protein is Probable cytosol aminopeptidase of Burkholderia mallei (strain SAVP1).